Here is a 229-residue protein sequence, read N- to C-terminus: Rab-like protein 2A (229 aa).

Residues 28–35, 76–80, and 133–136 each bind GTP; these read GDSAVGKS, DTAGQ, and NKID. The tract at residues 200 to 229 is disordered; it reads NLEQEEEDVPDQEQSGSIETPSEEVASPHS.

Belongs to the small GTPase superfamily. Rab family. Interacts with IFT27, IFT81, IFT172, ATP6V1E1, HK1, LDHC, MAPRE1 and HSPA2.

Functionally, plays an essential role in male fertility, sperm intra-flagellar transport, and tail assembly. Binds, in a GTP-regulated manner, to a specific set of effector proteins including key proteins involved in cilia development and function and delivers them into the growing sperm tail. This chain is Rab-like protein 2A (RABL2A), found in Pongo abelii (Sumatran orangutan).